The sequence spans 115 residues: Ribonuclease P protein component (115 aa).

This sequence belongs to the RnpA family. In terms of assembly, consists of a catalytic RNA component (M1 or rnpB) and a protein subunit.

It catalyses the reaction Endonucleolytic cleavage of RNA, removing 5'-extranucleotides from tRNA precursor.. Its function is as follows. RNaseP catalyzes the removal of the 5'-leader sequence from pre-tRNA to produce the mature 5'-terminus. It can also cleave other RNA substrates such as 4.5S RNA. The protein component plays an auxiliary but essential role in vivo by binding to the 5'-leader sequence and broadening the substrate specificity of the ribozyme. The sequence is that of Ribonuclease P protein component from Natranaerobius thermophilus (strain ATCC BAA-1301 / DSM 18059 / JW/NM-WN-LF).